The sequence spans 589 residues: Aspartate--tRNA ligase (589 aa).

E174 is a binding site for L-aspartate. The tract at residues 198–201 is aspartate; the sequence is QLFK. Residue R220 participates in L-aspartate binding. Residues 220–222 and Q229 contribute to the ATP site; that span reads RDE. H448 is a binding site for L-aspartate. E483 lines the ATP pocket. R490 serves as a coordination point for L-aspartate. 535-538 contacts ATP; it reads GIDR.

Belongs to the class-II aminoacyl-tRNA synthetase family. Type 1 subfamily. Homodimer.

It localises to the cytoplasm. It carries out the reaction tRNA(Asp) + L-aspartate + ATP = L-aspartyl-tRNA(Asp) + AMP + diphosphate. Catalyzes the attachment of L-aspartate to tRNA(Asp) in a two-step reaction: L-aspartate is first activated by ATP to form Asp-AMP and then transferred to the acceptor end of tRNA(Asp). The chain is Aspartate--tRNA ligase from Xylella fastidiosa (strain M12).